The chain runs to 300 residues: GTPase Era (300 aa).

The region spanning 7-175 is the Era-type G domain; sequence YCGFIAIVGR…EKFVRESLKE (169 aa). The tract at residues 15–22 is G1; it reads GRPNVGKS. 15–22 is a GTP binding site; it reads GRPNVGKS. The G2 stretch occupies residues 41 to 45; it reads QTTRH. The G3 stretch occupies residues 62–65; that stretch reads DTPG. GTP-binding positions include 62 to 66 and 124 to 127; these read DTPGL and NKVD. The G4 stretch occupies residues 124-127; sequence NKVD. The tract at residues 154–156 is G5; the sequence is ISA. A KH type-2 domain is found at 206-283; it reads MGEELPYSVT…HLELWVKVKA (78 aa).

This sequence belongs to the TRAFAC class TrmE-Era-EngA-EngB-Septin-like GTPase superfamily. Era GTPase family. Monomer.

Its subcellular location is the cytoplasm. It localises to the cell inner membrane. Functionally, an essential GTPase that binds both GDP and GTP, with rapid nucleotide exchange. Plays a role in 16S rRNA processing and 30S ribosomal subunit biogenesis and possibly also in cell cycle regulation and energy metabolism. In Glaesserella parasuis serovar 5 (strain SH0165) (Haemophilus parasuis), this protein is GTPase Era.